A 134-amino-acid chain; its full sequence is Flagellar basal-body rod protein FlgC (134 aa).

This sequence belongs to the flagella basal body rod proteins family. In terms of assembly, the basal body constitutes a major portion of the flagellar organelle and consists of four rings (L,P,S, and M) mounted on a central rod. The rod consists of about 26 subunits of FlgG in the distal portion, and FlgB, FlgC and FlgF are thought to build up the proximal portion of the rod with about 6 subunits each.

It is found in the bacterial flagellum basal body. This is Flagellar basal-body rod protein FlgC (flgC) from Escherichia coli O157:H7.